The following is a 226-amino-acid chain: UPF0173 metal-dependent hydrolase TM_1162 (226 aa).

It belongs to the UPF0173 family.

The chain is UPF0173 metal-dependent hydrolase TM_1162 from Thermotoga maritima (strain ATCC 43589 / DSM 3109 / JCM 10099 / NBRC 100826 / MSB8).